Reading from the N-terminus, the 155-residue chain is Large ribosomal subunit protein bL9c (155 aa).

This sequence belongs to the bacterial ribosomal protein bL9 family.

It localises to the plastid. It is found in the chloroplast. Functionally, binds to the 23S rRNA. This is Large ribosomal subunit protein bL9c from Pyropia yezoensis (Susabi-nori).